A 617-amino-acid polypeptide reads, in one-letter code: Na(+)/H(+) antiporter NhaA 1 (617 aa).

The disordered stretch occupies residues 1-26; sequence MTVTEPATQRGFPLLPSRLSRGSKAT. The segment at 1–433 is na(+)/H(+) antiporter NhaA; that stretch reads MTVTEPATQR…GWAIFRITDW (433 aa). 11 helical membrane passes run 33 to 53, 75 to 95, 113 to 133, 141 to 161, 171 to 191, 198 to 218, 234 to 254, 304 to 324, 341 to 361, 378 to 398, and 411 to 431; these read AAALLLTFTVVAILWANSPWA, MTVKHVVNDALMTFFFFIVGL, AVPVVAAAAGLILPAVVFLAF, HAWGVVISTDTAFLVGALAII, LFLLTLAVVDDVGALIAIAVL, VAPLVVAVALLGALALVRYLP, IALYLAGIHPTLAGVAVALLI, VSPVVSFVILPLFALVNAGVL, GIVAGLVVGKFVGIAGATWLI, IAGGAALSGIGFTISLFIVDI, and IGVLAASVLAFALGWAIFRIT. The Thioredoxin domain occupies 434–617; the sequence is LSPPEPVGLK…LIRALEAGRG (184 aa).

The protein in the N-terminal section; belongs to the NhaA Na(+)/H(+) (TC 2.A.33) antiporter family.

The protein localises to the cell membrane. The catalysed reaction is Na(+)(in) + 2 H(+)(out) = Na(+)(out) + 2 H(+)(in). Functionally, na(+)/H(+) antiporter that extrudes sodium in exchange for external protons. The chain is Na(+)/H(+) antiporter NhaA 1 from Mycolicibacterium gilvum (strain PYR-GCK) (Mycobacterium gilvum (strain PYR-GCK)).